Consider the following 374-residue polypeptide: Putative cullin-like protein 2 (374 aa).

This sequence belongs to the cullin family.

The sequence is that of Putative cullin-like protein 2 from Arabidopsis thaliana (Mouse-ear cress).